A 346-amino-acid polypeptide reads, in one-letter code: NADH-ubiquinone oxidoreductase chain 2 (346 aa).

The next 11 helical transmembrane spans lie at 1 to 21 (MNPHATPVLVLSLALGTTITI), 25 to 45 (HWVLAWTGLEINTLAIIPLIS), 60 to 80 (FLTQAAASALVLFSSMTNAWA), 95 to 115 (CLLLTAAIAIKLGLVPFHFWF), 124 to 144 (LMTALLLSTLMKFPPLTLLLM), 149 to 169 (LNPALLTTMALASAALGGWMG), 178 to 195 (ILAFSSISHLGWIAIILV), 200 to 219 (LALLTFYLYTIMTSAVFMAL), 242 to 262 (ATLMLMLLSLAGLPPLTGFMP), 274 to 294 (EMTPAAMAIAMLSLLSLFFYL), and 326 to 346 (AILASLSILLLPLSPMVHAIV).

It belongs to the complex I subunit 2 family.

The protein resides in the mitochondrion inner membrane. It catalyses the reaction a ubiquinone + NADH + 5 H(+)(in) = a ubiquinol + NAD(+) + 4 H(+)(out). Functionally, core subunit of the mitochondrial membrane respiratory chain NADH dehydrogenase (Complex I) that is believed to belong to the minimal assembly required for catalysis. Complex I functions in the transfer of electrons from NADH to the respiratory chain. The immediate electron acceptor for the enzyme is believed to be ubiquinone. In Mareca penelope (Eurasian wigeon), this protein is NADH-ubiquinone oxidoreductase chain 2 (MT-ND2).